The following is a 327-amino-acid chain: Probable cell division protein WhiA (327 aa).

Positions 275–308 form a DNA-binding region, H-T-H motif; that stretch reads SLEELGRLADPPMTKDAVAGRIRRLLSMADRKAK. Residues 304–327 form a disordered region; sequence DRKAKQDGIPDTESAVTPDLLEDA.

Belongs to the WhiA family.

In terms of biological role, involved in cell division and chromosome segregation. In Mycolicibacterium gilvum (strain PYR-GCK) (Mycobacterium gilvum (strain PYR-GCK)), this protein is Probable cell division protein WhiA.